The following is a 511-amino-acid chain: 2,3-bisphosphoglycerate-independent phosphoglycerate mutase (511 aa).

Mn(2+) contacts are provided by Asp-12 and Ser-62. Ser-62 serves as the catalytic Phosphoserine intermediate. Substrate contacts are provided by residues His-123, 154–155 (RD), Arg-181, Arg-187, 252–255 (RPDR), and Lys-335. Mn(2+) is bound by residues Asp-402, His-406, Asp-444, His-445, and His-462.

This sequence belongs to the BPG-independent phosphoglycerate mutase family. As to quaternary structure, monomer. It depends on Mn(2+) as a cofactor.

It carries out the reaction (2R)-2-phosphoglycerate = (2R)-3-phosphoglycerate. The protein operates within carbohydrate degradation; glycolysis; pyruvate from D-glyceraldehyde 3-phosphate: step 3/5. Catalyzes the interconversion of 2-phosphoglycerate and 3-phosphoglycerate. This chain is 2,3-bisphosphoglycerate-independent phosphoglycerate mutase, found in Acholeplasma laidlawii (strain PG-8A).